A 115-amino-acid chain; its full sequence is Photosystem II reaction center Psb28 protein (115 aa).

The protein belongs to the Psb28 family. In terms of assembly, part of the photosystem II complex.

It localises to the plastid. The protein resides in the chloroplast thylakoid membrane. In Trieres chinensis (Marine centric diatom), this protein is Photosystem II reaction center Psb28 protein.